Reading from the N-terminus, the 84-residue chain is Cell division topological specificity factor (84 aa).

It belongs to the MinE family.

Prevents the cell division inhibition by proteins MinC and MinD at internal division sites while permitting inhibition at polar sites. This ensures cell division at the proper site by restricting the formation of a division septum at the midpoint of the long axis of the cell. In Ralstonia nicotianae (strain ATCC BAA-1114 / GMI1000) (Ralstonia solanacearum), this protein is Cell division topological specificity factor.